We begin with the raw amino-acid sequence, 30 residues long: GLAGAISSVLDKLKQSQLIKNYAKKLGYPR.

Expressed by the skin dorsal glands.

The protein localises to the secreted. This Uperoleia inundata (Floodplain toadlet) protein is Uperin-6.2.